The primary structure comprises 225 residues: Uracil-DNA glycosylase (225 aa).

Catalysis depends on Asp64, which acts as the Proton acceptor.

This sequence belongs to the uracil-DNA glycosylase (UDG) superfamily. UNG family.

The protein localises to the cytoplasm. The enzyme catalyses Hydrolyzes single-stranded DNA or mismatched double-stranded DNA and polynucleotides, releasing free uracil.. Functionally, excises uracil residues from the DNA which can arise as a result of misincorporation of dUMP residues by DNA polymerase or due to deamination of cytosine. This is Uracil-DNA glycosylase from Agathobacter rectalis (strain ATCC 33656 / DSM 3377 / JCM 17463 / KCTC 5835 / VPI 0990) (Eubacterium rectale).